A 403-amino-acid polypeptide reads, in one-letter code: Argininosuccinate synthase (403 aa).

9–17 (AYSGGLDTS) provides a ligand contact to ATP. Residue tyrosine 86 coordinates L-citrulline. ATP is bound at residue glycine 116. The L-aspartate site is built by threonine 118, asparagine 122, and aspartate 123. An L-citrulline-binding site is contributed by asparagine 122. Residues arginine 126, serine 174, glutamate 259, and tyrosine 271 each contribute to the L-citrulline site.

It belongs to the argininosuccinate synthase family. Type 1 subfamily. In terms of assembly, homotetramer.

It is found in the cytoplasm. It catalyses the reaction L-citrulline + L-aspartate + ATP = 2-(N(omega)-L-arginino)succinate + AMP + diphosphate + H(+). It functions in the pathway amino-acid biosynthesis; L-arginine biosynthesis; L-arginine from L-ornithine and carbamoyl phosphate: step 2/3. The polypeptide is Argininosuccinate synthase (Ligilactobacillus salivarius (strain UCC118) (Lactobacillus salivarius)).